Reading from the N-terminus, the 261-residue chain is Phosphate import ATP-binding protein PstB (261 aa).

An ABC transporter domain is found at 15 to 256; the sequence is LQVRRLNFYY…PAHQETENYI (242 aa). ATP is bound at residue 47–54; that stretch reads GPSGCGKS.

It belongs to the ABC transporter superfamily. Phosphate importer (TC 3.A.1.7) family. As to quaternary structure, the complex is composed of two ATP-binding proteins (PstB), two transmembrane proteins (PstC and PstA) and a solute-binding protein (PstS).

The protein resides in the cell inner membrane. It catalyses the reaction phosphate(out) + ATP + H2O = ADP + 2 phosphate(in) + H(+). In terms of biological role, part of the ABC transporter complex PstSACB involved in phosphate import. Responsible for energy coupling to the transport system. The sequence is that of Phosphate import ATP-binding protein PstB from Burkholderia sp.